We begin with the raw amino-acid sequence, 264 residues long: S-adenosylmethionine decarboxylase proenzyme (264 aa).

Ser112 acts as the Schiff-base intermediate with substrate; via pyruvic acid in catalysis. At Ser112 the chain carries Pyruvic acid (Ser); by autocatalysis. Catalysis depends on His117, which acts as the Proton acceptor; for processing activity. Residue Cys140 is the Proton donor; for catalytic activity of the active site.

This sequence belongs to the prokaryotic AdoMetDC family. Type 2 subfamily. Heterooctamer of four alpha and four beta chains arranged as a tetramer of alpha/beta heterodimers. Pyruvate serves as cofactor. In terms of processing, is synthesized initially as an inactive proenzyme. Formation of the active enzyme involves a self-maturation process in which the active site pyruvoyl group is generated from an internal serine residue via an autocatalytic post-translational modification. Two non-identical subunits are generated from the proenzyme in this reaction, and the pyruvate is formed at the N-terminus of the alpha chain, which is derived from the carboxyl end of the proenzyme. The post-translation cleavage follows an unusual pathway, termed non-hydrolytic serinolysis, in which the side chain hydroxyl group of the serine supplies its oxygen atom to form the C-terminus of the beta chain, while the remainder of the serine residue undergoes an oxidative deamination to produce ammonia and the pyruvoyl group blocking the N-terminus of the alpha chain.

The catalysed reaction is S-adenosyl-L-methionine + H(+) = S-adenosyl 3-(methylsulfanyl)propylamine + CO2. Its pathway is amine and polyamine biosynthesis; S-adenosylmethioninamine biosynthesis; S-adenosylmethioninamine from S-adenosyl-L-methionine: step 1/1. Its function is as follows. Catalyzes the decarboxylation of S-adenosylmethionine to S-adenosylmethioninamine (dcAdoMet), the propylamine donor required for the synthesis of the polyamines spermine and spermidine from the diamine putrescine. In Salmonella dublin (strain CT_02021853), this protein is S-adenosylmethionine decarboxylase proenzyme.